Here is a 120-residue protein sequence, read N- to C-terminus: Flagellar protein FliT (120 aa).

The interval 1 to 50 (MENLSPLLIEYQGLLKLIRNIKAMALNGLWDDVVEQEIVYIQSIERISQI) is required for homodimerization. A fliD binding region spans residues 60-98 (VQLQFRQLLQDILDTESQVKELLQNRMQELAVLIQQSQN).

The protein belongs to the FliT family. As to quaternary structure, homodimer. Interacts with FliD and FlhC.

The protein resides in the cytoplasm. The protein localises to the cytosol. Dual-function protein that regulates the transcription of class 2 flagellar operons and that also acts as an export chaperone for the filament-capping protein FliD. As a transcriptional regulator, acts as an anti-FlhDC factor; it directly binds FlhC, thus inhibiting the binding of the FlhC/FlhD complex to class 2 promoters, resulting in decreased expression of class 2 flagellar operons. As a chaperone, effects FliD transition to the membrane by preventing its premature polymerization, and by directing it to the export apparatus. The polypeptide is Flagellar protein FliT (Dickeya chrysanthemi (Pectobacterium chrysanthemi)).